Reading from the N-terminus, the 429-residue chain is [LysW]-aminoadipate semialdehyde transaminase (429 aa).

Pyridoxal 5'-phosphate contacts are provided by residues 112-113 (GT) and phenylalanine 139. Residue arginine 142 participates in substrate binding. 226–229 (DEIQ) is a binding site for pyridoxal 5'-phosphate. The residue at position 255 (lysine 255) is an N6-(pyridoxal phosphate)lysine. Threonine 283 is a substrate binding site. Residue threonine 284 coordinates pyridoxal 5'-phosphate. The segment at 408–429 (LRAQQSEMGQQQVSQGESVQTE) is disordered. Over residues 411–429 (QQSEMGQQQVSQGESVQTE) the composition is skewed to low complexity.

The protein belongs to the class-III pyridoxal-phosphate-dependent aminotransferase family. LysJ subfamily. As to quaternary structure, homodimer. Pyridoxal 5'-phosphate is required as a cofactor.

Its subcellular location is the cytoplasm. The catalysed reaction is [amino-group carrier protein]-C-terminal-gamma-(L-lysyl)-L-glutamate + 2-oxoglutarate = [amino-group carrier protein]-C-terminal-N-(1-carboxy-5-oxopentan-1-yl)-L-glutamine + L-glutamate. Its pathway is amino-acid biosynthesis; L-lysine biosynthesis via AAA pathway; L-lysine from L-alpha-aminoadipate (Thermus route): step 4/5. In terms of biological role, catalyzes the transfer of the amino group of L-glutamate to [LysW]-aminoadipate 6-semialdehyde, generating [LysW]-gamma-L-lysine. In Deinococcus radiodurans (strain ATCC 13939 / DSM 20539 / JCM 16871 / CCUG 27074 / LMG 4051 / NBRC 15346 / NCIMB 9279 / VKM B-1422 / R1), this protein is [LysW]-aminoadipate semialdehyde transaminase.